Here is a 197-residue protein sequence, read N- to C-terminus: ATP-dependent Clp protease proteolytic subunit 2 (197 aa).

Ser101 acts as the Nucleophile in catalysis. Residue His126 is part of the active site.

This sequence belongs to the peptidase S14 family. Fourteen ClpP subunits assemble into 2 heptameric rings which stack back to back to give a disk-like structure with a central cavity, resembling the structure of eukaryotic proteasomes.

The protein localises to the cytoplasm. The enzyme catalyses Hydrolysis of proteins to small peptides in the presence of ATP and magnesium. alpha-casein is the usual test substrate. In the absence of ATP, only oligopeptides shorter than five residues are hydrolyzed (such as succinyl-Leu-Tyr-|-NHMec, and Leu-Tyr-Leu-|-Tyr-Trp, in which cleavage of the -Tyr-|-Leu- and -Tyr-|-Trp bonds also occurs).. Cleaves peptides in various proteins in a process that requires ATP hydrolysis. Has a chymotrypsin-like activity. Plays a major role in the degradation of misfolded proteins. This chain is ATP-dependent Clp protease proteolytic subunit 2, found in Trichormus variabilis (strain ATCC 29413 / PCC 7937) (Anabaena variabilis).